We begin with the raw amino-acid sequence, 127 residues long: Large ribosomal subunit protein bL19 (127 aa).

It belongs to the bacterial ribosomal protein bL19 family.

This protein is located at the 30S-50S ribosomal subunit interface and may play a role in the structure and function of the aminoacyl-tRNA binding site. The polypeptide is Large ribosomal subunit protein bL19 (Trichodesmium erythraeum (strain IMS101)).